The chain runs to 474 residues: Bifunctional protein HldE (474 aa).

Residues 1 to 318 (MKLSMPRFDQ…RAIQREEGSE (318 aa)) form a ribokinase region. 194–197 (NLSE) serves as a coordination point for ATP. The active site involves Asp-263. The segment at 343–474 (FTNGCFDILH…AIVEKIRGQG (132 aa)) is cytidylyltransferase.

In the N-terminal section; belongs to the carbohydrate kinase PfkB family. This sequence in the C-terminal section; belongs to the cytidylyltransferase family. As to quaternary structure, homodimer.

It carries out the reaction D-glycero-beta-D-manno-heptose 7-phosphate + ATP = D-glycero-beta-D-manno-heptose 1,7-bisphosphate + ADP + H(+). It catalyses the reaction D-glycero-beta-D-manno-heptose 1-phosphate + ATP + H(+) = ADP-D-glycero-beta-D-manno-heptose + diphosphate. Its pathway is nucleotide-sugar biosynthesis; ADP-L-glycero-beta-D-manno-heptose biosynthesis; ADP-L-glycero-beta-D-manno-heptose from D-glycero-beta-D-manno-heptose 7-phosphate: step 1/4. The protein operates within nucleotide-sugar biosynthesis; ADP-L-glycero-beta-D-manno-heptose biosynthesis; ADP-L-glycero-beta-D-manno-heptose from D-glycero-beta-D-manno-heptose 7-phosphate: step 3/4. In terms of biological role, catalyzes the phosphorylation of D-glycero-D-manno-heptose 7-phosphate at the C-1 position to selectively form D-glycero-beta-D-manno-heptose-1,7-bisphosphate. Catalyzes the ADP transfer from ATP to D-glycero-beta-D-manno-heptose 1-phosphate, yielding ADP-D-glycero-beta-D-manno-heptose. The polypeptide is Bifunctional protein HldE (Pseudomonas syringae pv. syringae (strain B728a)).